Here is a 114-residue protein sequence, read N- to C-terminus: Chaperone protein YscY (114 aa).

As to quaternary structure, binds to YscX.

It localises to the cytoplasm. Required for Yop secretion. Functions probably as a chaperone which stabilizes YscX within the cell, before its secretion. The chain is Chaperone protein YscY (yscY) from Yersinia enterocolitica serotype O:8 / biotype 1B (strain NCTC 13174 / 8081).